A 114-amino-acid polypeptide reads, in one-letter code: Phosphoribosyl-AMP cyclohydrolase (114 aa).

Asp80 contacts Mg(2+). Cys81 provides a ligand contact to Zn(2+). Residues Asp82 and Asp84 each contribute to the Mg(2+) site. Residues Cys97 and Cys104 each contribute to the Zn(2+) site.

Belongs to the PRA-CH family. In terms of assembly, homodimer. Requires Mg(2+) as cofactor. Zn(2+) is required as a cofactor.

The protein localises to the cytoplasm. The enzyme catalyses 1-(5-phospho-beta-D-ribosyl)-5'-AMP + H2O = 1-(5-phospho-beta-D-ribosyl)-5-[(5-phospho-beta-D-ribosylamino)methylideneamino]imidazole-4-carboxamide. It functions in the pathway amino-acid biosynthesis; L-histidine biosynthesis; L-histidine from 5-phospho-alpha-D-ribose 1-diphosphate: step 3/9. Functionally, catalyzes the hydrolysis of the adenine ring of phosphoribosyl-AMP. This Rhodococcus jostii (strain RHA1) protein is Phosphoribosyl-AMP cyclohydrolase.